The sequence spans 120 residues: Putative iron-sulfur cluster insertion protein ErpA (120 aa).

Iron-sulfur cluster is bound by residues Cys49, Cys113, and Cys115.

Belongs to the HesB/IscA family. In terms of assembly, homodimer. It depends on iron-sulfur cluster as a cofactor.

In terms of biological role, required for insertion of 4Fe-4S clusters. The sequence is that of Putative iron-sulfur cluster insertion protein ErpA from Albidiferax ferrireducens (strain ATCC BAA-621 / DSM 15236 / T118) (Rhodoferax ferrireducens).